The primary structure comprises 156 residues: MVSVLDKINVTELRPGNMLLQQPPFLFVDRILEFDEETITCSKYLSHNEPFFSGHFPTQPIMPGVLIIEFAAQASLLLTMLQLNELEPLMGYLVKTENFTFHALAEPGTELEAKVKMLKKMGNYYTTQVTVRRSDNKKKVAKGQLVFYLDEEGKER.

Residue H55 is part of the active site.

The protein belongs to the thioester dehydratase family. FabZ subfamily.

This is an uncharacterized protein from Halalkalibacterium halodurans (strain ATCC BAA-125 / DSM 18197 / FERM 7344 / JCM 9153 / C-125) (Bacillus halodurans).